The following is a 244-amino-acid chain: Phosphoadenosine 5'-phosphosulfate reductase (244 aa).

Catalysis depends on cysteine 239, which acts as the Nucleophile; cysteine thiosulfonate intermediate.

Belongs to the PAPS reductase family. CysH subfamily.

It is found in the cytoplasm. The catalysed reaction is [thioredoxin]-disulfide + sulfite + adenosine 3',5'-bisphosphate + 2 H(+) = [thioredoxin]-dithiol + 3'-phosphoadenylyl sulfate. It functions in the pathway sulfur metabolism; hydrogen sulfide biosynthesis; sulfite from sulfate: step 3/3. Its function is as follows. Catalyzes the formation of sulfite from phosphoadenosine 5'-phosphosulfate (PAPS) using thioredoxin as an electron donor. The chain is Phosphoadenosine 5'-phosphosulfate reductase from Salmonella arizonae (strain ATCC BAA-731 / CDC346-86 / RSK2980).